Consider the following 364-residue polypeptide: Selenide, water dikinase (364 aa).

The active site involves Sec25. Position 25 (Sec25) is a non-standard amino acid, selenocysteine. ATP contacts are provided by residues Lys28, 46–48 (GYD), Asp66, Asp89, and 141–143 (GQT). Asp48 lines the Mg(2+) pocket. Asp89 provides a ligand contact to Mg(2+). Residue Asp244 coordinates Mg(2+).

It belongs to the selenophosphate synthase 1 family. Class II subfamily. As to quaternary structure, homodimer. Requires Mg(2+) as cofactor.

It carries out the reaction hydrogenselenide + ATP + H2O = selenophosphate + AMP + phosphate + 2 H(+). Synthesizes selenophosphate from selenide and ATP. This chain is Selenide, water dikinase (selD), found in Dictyostelium discoideum (Social amoeba).